The chain runs to 982 residues: Probable DNA-directed RNA polymerase (982 aa).

This sequence belongs to the RNA polymerase beta chain family.

The catalysed reaction is RNA(n) + a ribonucleoside 5'-triphosphate = RNA(n+1) + diphosphate. Functionally, the presence of the two linear plasmids, termed pGKL1 and pGKL2, in strains of Kluyveromyces lactis confers the killer phenotype to the host cell, by promoting the secretion of a toxin able to inhibit the growth of sensitive strains. This Kluyveromyces lactis (strain ATCC 8585 / CBS 2359 / DSM 70799 / NBRC 1267 / NRRL Y-1140 / WM37) (Yeast) protein is Probable DNA-directed RNA polymerase.